Reading from the N-terminus, the 229-residue chain is Cytochrome c oxidase subunit 2 (229 aa).

At 1-14 the chain is on the mitochondrial intermembrane side; sequence MANHLQFNFQDATS. The chain crosses the membrane as a helical span at residues 15 to 45; sequence PLMQELVKFHDHSLTILFFISALILYVLMMT. Topologically, residues 46–59 are mitochondrial matrix; the sequence is SLSKLTNKNILDSQ. The helical transmembrane segment at 60–87 threads the bilayer; that stretch reads EIEMVWTVIPAFILIMLALPSIQILYLM. Residues 88–229 are Mitochondrial intermembrane-facing; the sequence is DEIASPDITI…FESWIIKLSL (142 aa). His162, Cys197, Glu199, Cys201, His205, and Met208 together coordinate Cu cation. Glu199 lines the Mg(2+) pocket.

This sequence belongs to the cytochrome c oxidase subunit 2 family. As to quaternary structure, component of the cytochrome c oxidase (complex IV, CIV), a multisubunit enzyme composed of 14 subunits. The complex is composed of a catalytic core of 3 subunits MT-CO1, MT-CO2 and MT-CO3, encoded in the mitochondrial DNA, and 11 supernumerary subunits COX4I, COX5A, COX5B, COX6A, COX6B, COX6C, COX7A, COX7B, COX7C, COX8 and NDUFA4, which are encoded in the nuclear genome. The complex exists as a monomer or a dimer and forms supercomplexes (SCs) in the inner mitochondrial membrane with NADH-ubiquinone oxidoreductase (complex I, CI) and ubiquinol-cytochrome c oxidoreductase (cytochrome b-c1 complex, complex III, CIII), resulting in different assemblies (supercomplex SCI(1)III(2)IV(1) and megacomplex MCI(2)III(2)IV(2)). Found in a complex with TMEM177, COA6, COX18, COX20, SCO1 and SCO2. Interacts with TMEM177 in a COX20-dependent manner. Interacts with COX20. Interacts with COX16. Cu cation is required as a cofactor.

It localises to the mitochondrion inner membrane. It catalyses the reaction 4 Fe(II)-[cytochrome c] + O2 + 8 H(+)(in) = 4 Fe(III)-[cytochrome c] + 2 H2O + 4 H(+)(out). Functionally, component of the cytochrome c oxidase, the last enzyme in the mitochondrial electron transport chain which drives oxidative phosphorylation. The respiratory chain contains 3 multisubunit complexes succinate dehydrogenase (complex II, CII), ubiquinol-cytochrome c oxidoreductase (cytochrome b-c1 complex, complex III, CIII) and cytochrome c oxidase (complex IV, CIV), that cooperate to transfer electrons derived from NADH and succinate to molecular oxygen, creating an electrochemical gradient over the inner membrane that drives transmembrane transport and the ATP synthase. Cytochrome c oxidase is the component of the respiratory chain that catalyzes the reduction of oxygen to water. Electrons originating from reduced cytochrome c in the intermembrane space (IMS) are transferred via the dinuclear copper A center (CU(A)) of subunit 2 and heme A of subunit 1 to the active site in subunit 1, a binuclear center (BNC) formed by heme A3 and copper B (CU(B)). The BNC reduces molecular oxygen to 2 water molecules using 4 electrons from cytochrome c in the IMS and 4 protons from the mitochondrial matrix. The protein is Cytochrome c oxidase subunit 2 (MT-CO2) of Myxine glutinosa (Atlantic hagfish).